The sequence spans 472 residues: ATP-dependent protease ATPase subunit HslU (472 aa).

ATP contacts are provided by residues I20, 62-67, D285, E350, and R422; that span reads GVGKTE.

The protein belongs to the ClpX chaperone family. HslU subfamily. A double ring-shaped homohexamer of HslV is capped on each side by a ring-shaped HslU homohexamer. The assembly of the HslU/HslV complex is dependent on binding of ATP.

The protein localises to the cytoplasm. Its function is as follows. ATPase subunit of a proteasome-like degradation complex; this subunit has chaperone activity. The binding of ATP and its subsequent hydrolysis by HslU are essential for unfolding of protein substrates subsequently hydrolyzed by HslV. HslU recognizes the N-terminal part of its protein substrates and unfolds these before they are guided to HslV for hydrolysis. In Lactiplantibacillus plantarum (strain ATCC BAA-793 / NCIMB 8826 / WCFS1) (Lactobacillus plantarum), this protein is ATP-dependent protease ATPase subunit HslU.